The sequence spans 392 residues: ATP phosphoribosyltransferase regulatory subunit (392 aa).

The protein belongs to the class-II aminoacyl-tRNA synthetase family. HisZ subfamily. In terms of assembly, heteromultimer composed of HisG and HisZ subunits.

The protein localises to the cytoplasm. The protein operates within amino-acid biosynthesis; L-histidine biosynthesis; L-histidine from 5-phospho-alpha-D-ribose 1-diphosphate: step 1/9. Required for the first step of histidine biosynthesis. May allow the feedback regulation of ATP phosphoribosyltransferase activity by histidine. The sequence is that of ATP phosphoribosyltransferase regulatory subunit from Synechococcus sp. (strain CC9902).